The chain runs to 2121 residues: PAM2 domain-containing protein UPA2 (2121 aa).

The PAM2 1 signature appears at 1–17; it reads MEGSSLNVAAPVFKPSG. Disordered stretches follow at residues 14–46, 262–302, 375–397, 475–507, 522–543, and 586–819; these read KPSG…AVHA, QPED…SALT, AATT…PPST, ARRR…SSGG, ANSD…QKPL, and DLGR…QFSR. Residues 339–599 form an effector domain region; that stretch reads PWPYSLGLPD…GFGYEPQSPN (261 aa). Residues 596 to 607 are compositionally biased toward polar residues; that stretch reads QSPNAAPNGTTS. Composition is skewed to acidic residues over residues 626 to 637 and 646 to 658; these read EENDELGFDGEE and EDAD…EEPN. Positions 679 to 689 are enriched in basic and acidic residues; sequence DGHDRYADDNQ. Over residues 690–712 the composition is skewed to polar residues; that stretch reads SHASNDDSLQDSLTPSDEQFSNP. The span at 719–735 shows a compositional bias: basic and acidic residues; that stretch reads REERILRRQHRAAERAA. A compositionally biased stretch (basic residues) spans 736-745; sequence RRERKQRQRG. Polar residues-rich tracts occupy residues 749–758 and 777–788; these read SDNTLPSSSI and NPRNGNTISNPS. 2 consecutive short sequence motifs (PAM2) follow at residues 858-874 and 920-937; these read SGIS…KFGG and TNAA…PGLF. Positions 950–960 are enriched in polar residues; the sequence is NSLSASPSIAV. The disordered stretch occupies residues 950 to 1012; the sequence is NSLSASPSIA…PSPPRPKASA (63 aa). A compositionally biased stretch (basic and acidic residues) spans 966–981; that stretch reads GADHRETENRDMQGRE. The short motif at 1046–1063 is the PAM2 4 element; it reads SHESRLTADAPSFVPTWA. Disordered stretches follow at residues 1076 to 1096, 1119 to 1261, and 1337 to 1369; these read KRPS…KDLP, SKDD…EEES, and SHAR…NSSL. Residues 1198–1207 are compositionally biased toward polar residues; the sequence is HSPSISQTSD. Positions 1248-1261 are enriched in acidic residues; sequence GGNDEDDYEDEEES. Residues 1345–1369 show a composition bias toward polar residues; sequence ETQSTIRPLRQRNSSSDVKTANSSL. Residues 1783-2054 are a coiled coil; sequence LEKQAQANAD…EAKLQTLTAS (272 aa). The interval 2099–2121 is disordered; that stretch reads SFASTAGSQGKKEVEVDEGGWWS. Residues 2118–2120 carry the GWW motif; the sequence is GWW.

This sequence belongs to the UPA1 PAM2 domain-binding protein family. In terms of assembly, might form homodimers via its C-terminal coiled-coil domain. Part of large ribonucleoprotein complexes (mRNPs) containing RNA-binding proteins RRM4 and PAB1, endosome-binding protein UPA1, core scaffold protein UPA2 and associated factor GRP1. Interacts (via PAM2 motifs) with PAB1.

Its subcellular location is the cytoplasm. The protein resides in the cytoskeleton. It localises to the endosome. In terms of biological role, core component of endosomal mRNA transport and appears to carry out crucial scaffolding functions. The endosomal mRNA transport regulates polarity of the infectious hyphae by transporting a broad spectrum of cargo mRNAs from the nucleus to cell poles. The polypeptide is PAM2 domain-containing protein UPA2 (Mycosarcoma maydis (Corn smut fungus)).